The chain runs to 1388 residues: Rho-associated protein kinase 2 (1388 aa).

A disordered region spans residues 1–24; that stretch reads MSRPPPTGKMPGAPEAVSGDGAGA. Residues 92 to 354 enclose the Protein kinase domain; it reads YDVVKVIGRG…VEEIKQHPFF (263 aa). ATP is bound by residues 98–106 and Lys121; that span reads IGRGAFGEV. The active-site Proton acceptor is the Asp214. Positions 357–425 constitute an AGC-kinase C-terminal domain; it reads DQWNWDNIRE…YRENLLLSDS (69 aa). Positions 363 to 784 are interaction with PPP1R12A; that stretch reads NIRETAAPVV…INELLKQKDV (422 aa). Residues 373 to 420 form an interaction with NPM1 region; sequence PELSSDIDSSNFDDIEDDKGDVETFPIPKAFVGNQLPFIGFTYYRENL. Thr414 is subject to Phosphothreonine; by ROCK2. Coiled-coil stretches lie at residues 439-1025 and 1053-1131; these read NEES…KQLL and DTDV…IGLD. One can recognise an REM-1 domain in the interval 497 to 573; that stretch reads TLRQLEREKA…LDETNALLRT (77 aa). Over residues 512–530 the composition is skewed to basic and acidic residues; the sequence is NAEYQRKADHEADKKRNLE. The segment at 512 to 532 is disordered; that stretch reads NAEYQRKADHEADKKRNLEND. Phosphotyrosine; by SRC is present on Tyr722. The region spanning 979–1047 is the RhoBD domain; sequence TSDVANLANE…LAEIMNRKEP (69 aa). Positions 979–1047 are RHOA binding; that stretch reads TSDVANLANE…LAEIMNRKEP (69 aa). Ser1137 bears the Phosphoserine mark. In terms of domain architecture, PH spans 1150-1349; the sequence is ESRLEGWLSL…WVSRLVKKIP (200 aa). The residue at position 1212 (Thr1212) is a Phosphothreonine. Residues 1260 to 1315 form a Phorbol-ester/DAG-type zinc finger; it reads GHEFIPTLYHFPTNCEACMKPLWHMFKPPPALECRRCHIKCHKDHMDKKEEIIAPC. Residues 1345–1388 form a disordered region; the sequence is VKKIPKKPPAPDPFARSSPRTSMKIQQNQSIRRPSRQLAPNKPS. Ser1362 and Ser1374 each carry phosphoserine. Residues 1362 to 1376 show a composition bias toward polar residues; it reads SPRTSMKIQQNQSIR.

This sequence belongs to the protein kinase superfamily. AGC Ser/Thr protein kinase family. As to quaternary structure, homodimer. Interacts with IRS1. Interacts with RAF1. Interacts with RHOA (activated by GTP). Interacts with RHOB and RHOC. Interacts with PPP1R12A. Interacts with EP300. Interacts with CHORDC1. Interacts with BRCA2. Interacts with NPM1; this interaction enhances ROCK2 activity. Interacts with SORL1. Interacts with PJVK. Mg(2+) is required as a cofactor. Post-translationally, autophosphorylated. Phosphorylation at Tyr-722 reduces its binding to RHOA and is crucial for focal adhesion dynamics. Dephosphorylation by PTPN11 stimulates its RHOA binding activity. In terms of processing, cleaved by granzyme B during apoptosis. This leads to constitutive activation of the kinase and membrane blebbing. Highly expressed in whole brain and in cerebellum, and at lower levels in heart and lung. Detected at low levels in skeletal muscle, spleen, liver, kidney and pancreas.

It is found in the cytoplasm. Its subcellular location is the cell membrane. The protein resides in the nucleus. It localises to the cytoskeleton. The protein localises to the microtubule organizing center. It is found in the centrosome. It carries out the reaction L-seryl-[protein] + ATP = O-phospho-L-seryl-[protein] + ADP + H(+). It catalyses the reaction L-threonyl-[protein] + ATP = O-phospho-L-threonyl-[protein] + ADP + H(+). Activated by RHOA binding. Inhibited by Y-27632. In terms of biological role, protein kinase which is a key regulator of actin cytoskeleton and cell polarity. Involved in regulation of smooth muscle contraction, actin cytoskeleton organization, stress fiber and focal adhesion formation, neurite retraction, cell adhesion and motility via phosphorylation of ADD1, BRCA2, CNN1, EZR, DPYSL2, EP300, MSN, MYL9/MLC2, NPM1, RDX, PPP1R12A and VIM. Phosphorylates SORL1 and IRF4. Acts as a negative regulator of VEGF-induced angiogenic endothelial cell activation. Positively regulates the activation of p42/MAPK1-p44/MAPK3 and of p90RSK/RPS6KA1 during myogenic differentiation. Plays an important role in the timely initiation of centrosome duplication. Inhibits keratinocyte terminal differentiation. May regulate closure of the eyelids and ventral body wall through organization of actomyosin bundles. Plays a critical role in the regulation of spine and synaptic properties in the hippocampus. Plays an important role in generating the circadian rhythm of the aortic myofilament Ca(2+) sensitivity and vascular contractility by modulating the myosin light chain phosphorylation. The polypeptide is Rho-associated protein kinase 2 (ROCK2) (Bos taurus (Bovine)).